The chain runs to 425 residues: MATASFDSAPGASRALPAIEKAPEVTALSTLPGRKASLVGLTREGLKQALIGIGVPERETRMRVSQVWHWIYVRGAREFSEMTNVGKGLKAQLADHFTLERPEVVTEQVSRDGTRKWLLRMAPTGAHDHNRGAEIECVYIPGDDRGTLCVSSQVGCTLTCSFCHTGTQRLVRNLSTAEIVAQLVVARDALGDFTGQMPGKDGGEPGRLVTNIVFMGMGEPLYNLDAVIDAIAVMSDQEGLALSRRRITVSTSGVVPQMERLGLEANAMLAISLHAVRDELRDELVPLNRKYPIAQLLDACRNYPGLSNARRITFEYVMLKGVNDSDADARALVRLLKGIPAKINLIPFNPWPGSKYECSDWERIERFSEIVFTAGYASPVRTPRGRDILAACGQLKSETEKLRARARLMLEEGMGAEAVYADQVD.

E136 serves as the catalytic Proton acceptor. Positions 142-381 (GDDRGTLCVS…FTAGYASPVR (240 aa)) constitute a Radical SAM core domain. C149 and C392 are oxidised to a cystine. [4Fe-4S] cluster-binding residues include C156, C160, and C163. Residues 218–219 (GE), S250, 272–274 (SLH), and N349 contribute to the S-adenosyl-L-methionine site. C392 acts as the S-methylcysteine intermediate in catalysis.

It belongs to the radical SAM superfamily. RlmN family. The cofactor is [4Fe-4S] cluster.

It is found in the cytoplasm. The enzyme catalyses adenosine(2503) in 23S rRNA + 2 reduced [2Fe-2S]-[ferredoxin] + 2 S-adenosyl-L-methionine = 2-methyladenosine(2503) in 23S rRNA + 5'-deoxyadenosine + L-methionine + 2 oxidized [2Fe-2S]-[ferredoxin] + S-adenosyl-L-homocysteine. It catalyses the reaction adenosine(37) in tRNA + 2 reduced [2Fe-2S]-[ferredoxin] + 2 S-adenosyl-L-methionine = 2-methyladenosine(37) in tRNA + 5'-deoxyadenosine + L-methionine + 2 oxidized [2Fe-2S]-[ferredoxin] + S-adenosyl-L-homocysteine. Functionally, specifically methylates position 2 of adenine 2503 in 23S rRNA and position 2 of adenine 37 in tRNAs. m2A2503 modification seems to play a crucial role in the proofreading step occurring at the peptidyl transferase center and thus would serve to optimize ribosomal fidelity. This chain is Dual-specificity RNA methyltransferase RlmN, found in Methylorubrum extorquens (strain PA1) (Methylobacterium extorquens).